The sequence spans 536 residues: Putative beta-xylosidase (536 aa).

Aspartate 14 acts as the Proton acceptor in catalysis. Glutamate 186 functions as the Proton donor in the catalytic mechanism.

The protein belongs to the glycosyl hydrolase 43 family.

It catalyses the reaction Hydrolysis of (1-&gt;4)-beta-D-xylans, to remove successive D-xylose residues from the non-reducing termini.. This Escherichia coli (strain K12) protein is Putative beta-xylosidase (yagH).